The chain runs to 992 residues: Vacuolar membrane protease (992 aa).

The Cytoplasmic portion of the chain corresponds to 1 to 24 (MSPAMANPRVRKFNPIAFTPLPVT). Residues 25–45 (FITTIVYLAVLILVLVTYLVV) form a helical membrane-spanning segment. The Vacuolar segment spans residues 46-390 (PPAPTLEMSP…SAFAVFRLHT (345 aa)). 3 N-linked (GlcNAc...) asparagine glycosylation sites follow: Asn59, Asn115, and Asn118. Zn(2+) contacts are provided by His174 and Asp186. The active-site Proton acceptor is Glu220. Residue Glu221 participates in Zn(2+) binding. N-linked (GlcNAc...) asparagine glycosylation occurs at Asn237. Glu246 and His319 together coordinate Zn(2+). The helical transmembrane segment at 391-411 (LFALSVTLLVIGPLVLFITSI) threads the bilayer. The Cytoplasmic portion of the chain corresponds to 412 to 446 (ALSKTDRMYLFSMSKSLGGASETVSLRGLRGLFRT). A helical membrane pass occupies residues 447-467 (PIILTVTTVISIGLAYLLEKI). The Vacuolar segment spans residues 468-474 (NPYIVHS). Residues 475–495 (SQFAVWSMMLSVWIFVAWFLA) traverse the membrane as a helical segment. Over 496–508 (RVADFFRPSALHR) the chain is Cytoplasmic. The helical transmembrane segment at 509-529 (AYSYTWIFIVTWIMLVISTVY) threads the bilayer. The Vacuolar segment spans residues 530–533 (ANQK). Residues 534 to 554 (GIAAGYFTFFYFAAVFLATWV) traverse the membrane as a helical segment. Residues 555-671 (SYLELFSLPR…WSWTLPRWTW (117 aa)) lie on the Cytoplasmic side of the membrane. The tract at residues 579-620 (RSSSLSSRLLTPSADELPSDIGPNGAENVGDPDETDPTESTS) is disordered. A helical membrane pass occupies residues 672 to 692 (ILQLLLLAPIVIILVGQVGLL). Residues 693–708 (LTTAMSQIGSDGVSTF) are Vacuolar-facing. Residues 709-729 (IVYLACALFSTLLFAPLLPFI) traverse the membrane as a helical segment. The Cytoplasmic portion of the chain corresponds to 730–736 (HRFTYHV). A helical membrane pass occupies residues 737–757 (PIFLLLIFIGTLIYNLVAFPF). Over 758-992 (SPANRLKIFF…VEASHDFIIQ (235 aa)) the chain is Vacuolar. N-linked (GlcNAc...) asparagine glycosylation is found at Asn805, Asn846, and Asn954.

This sequence belongs to the peptidase M28 family. Zn(2+) serves as cofactor.

The protein resides in the vacuole membrane. Functionally, may be involved in vacuolar sorting and osmoregulation. The polypeptide is Vacuolar membrane protease (Paracoccidioides brasiliensis (strain Pb18)).